We begin with the raw amino-acid sequence, 889 residues long: Protein translocase subunit SecA (889 aa).

Residues glutamine 87, 105 to 109, and aspartate 494 each bind ATP; that span reads GEGKT. Positions 823–889 are disordered; that stretch reads ESLRPEEADL…RMDKDTKGKR (67 aa). Basic and acidic residues predominate over residues 867–889; the sequence is PRDDRPMNREERRRMDKDTKGKR.

This sequence belongs to the SecA family. Monomer and homodimer. Part of the essential Sec protein translocation apparatus which comprises SecA, SecYEG and auxiliary proteins SecDF-YajC and YidC.

The protein localises to the cell inner membrane. It is found in the cytoplasm. It carries out the reaction ATP + H2O + cellular proteinSide 1 = ADP + phosphate + cellular proteinSide 2.. In terms of biological role, part of the Sec protein translocase complex. Interacts with the SecYEG preprotein conducting channel. Has a central role in coupling the hydrolysis of ATP to the transfer of proteins into and across the cell membrane, serving as an ATP-driven molecular motor driving the stepwise translocation of polypeptide chains across the membrane. In Bdellovibrio bacteriovorus (strain ATCC 15356 / DSM 50701 / NCIMB 9529 / HD100), this protein is Protein translocase subunit SecA.